We begin with the raw amino-acid sequence, 172 residues long: S-ribosylhomocysteine lyase (172 aa).

Fe cation is bound by residues His-54, His-58, and Cys-128.

It belongs to the LuxS family. Homodimer. It depends on Fe cation as a cofactor.

The enzyme catalyses S-(5-deoxy-D-ribos-5-yl)-L-homocysteine = (S)-4,5-dihydroxypentane-2,3-dione + L-homocysteine. Functionally, involved in the synthesis of autoinducer 2 (AI-2) which is secreted by bacteria and is used to communicate both the cell density and the metabolic potential of the environment. The regulation of gene expression in response to changes in cell density is called quorum sensing. Catalyzes the transformation of S-ribosylhomocysteine (RHC) to homocysteine (HC) and 4,5-dihydroxy-2,3-pentadione (DPD). This is S-ribosylhomocysteine lyase from Aliivibrio salmonicida (strain LFI1238) (Vibrio salmonicida (strain LFI1238)).